Here is a 378-residue protein sequence, read N- to C-terminus: Mating-type protein MAT-1 (378 aa).

Positions 60–117 (KARKALNAFVGFRCYYITIPMFKPWPMKKLSNLIGLLWEADPNKSLWSLMAKPWSTIR) form a DNA-binding region, alpha box.

Belongs to the MATALPHA1 family.

The protein localises to the nucleus. In terms of biological role, mating type proteins are sequence specific DNA-binding proteins that act as master switches in fungal differentiation by controlling gene expression in a cell type-specific fashion. Transcriptional activator that induces the transcription of alpha-specific genes. This Cochliobolus sativus (Common root rot and spot blotch fungus) protein is Mating-type protein MAT-1 (MAT1).